Reading from the N-terminus, the 698-residue chain is Polyphosphate kinase 1 (698 aa).

N46 contributes to the ATP binding site. Residues R377 and R407 each coordinate Mg(2+). Catalysis depends on H437, which acts as the Phosphohistidine intermediate. Y470, R566, and H594 together coordinate ATP.

Belongs to the polyphosphate kinase 1 (PPK1) family. Mg(2+) serves as cofactor. In terms of processing, an intermediate of this reaction is the autophosphorylated ppk in which a phosphate is covalently linked to a histidine residue through a N-P bond.

It carries out the reaction [phosphate](n) + ATP = [phosphate](n+1) + ADP. Functionally, catalyzes the reversible transfer of the terminal phosphate of ATP to form a long-chain polyphosphate (polyP). This is Polyphosphate kinase 1 from Chlorobaculum tepidum (strain ATCC 49652 / DSM 12025 / NBRC 103806 / TLS) (Chlorobium tepidum).